The primary structure comprises 343 residues: Holliday junction branch migration complex subunit RuvB (343 aa).

The segment at 1–185 (MEQEDFNIRE…FGINLHLEYY (185 aa)) is large ATPase domain (RuvB-L). Residues Leu-24, Arg-25, Gly-66, Lys-69, Thr-70, Thr-71, 132 to 134 (EDY), Arg-175, Tyr-185, and Arg-222 contribute to the ATP site. A Mg(2+)-binding site is contributed by Thr-70. Positions 186–256 (DDDILSNIIR…IAQFALEALN (71 aa)) are small ATPAse domain (RuvB-S). The interval 259 to 343 (KYGLDEIDNK…YSSQKTLFND (85 aa)) is head domain (RuvB-H). DNA is bound by residues Arg-314 and Arg-319.

Belongs to the RuvB family. As to quaternary structure, homohexamer. Forms an RuvA(8)-RuvB(12)-Holliday junction (HJ) complex. HJ DNA is sandwiched between 2 RuvA tetramers; dsDNA enters through RuvA and exits via RuvB. An RuvB hexamer assembles on each DNA strand where it exits the tetramer. Each RuvB hexamer is contacted by two RuvA subunits (via domain III) on 2 adjacent RuvB subunits; this complex drives branch migration. In the full resolvosome a probable DNA-RuvA(4)-RuvB(12)-RuvC(2) complex forms which resolves the HJ.

The protein resides in the cytoplasm. It carries out the reaction ATP + H2O = ADP + phosphate + H(+). Its function is as follows. The RuvA-RuvB-RuvC complex processes Holliday junction (HJ) DNA during genetic recombination and DNA repair, while the RuvA-RuvB complex plays an important role in the rescue of blocked DNA replication forks via replication fork reversal (RFR). RuvA specifically binds to HJ cruciform DNA, conferring on it an open structure. The RuvB hexamer acts as an ATP-dependent pump, pulling dsDNA into and through the RuvAB complex. RuvB forms 2 homohexamers on either side of HJ DNA bound by 1 or 2 RuvA tetramers; 4 subunits per hexamer contact DNA at a time. Coordinated motions by a converter formed by DNA-disengaged RuvB subunits stimulates ATP hydrolysis and nucleotide exchange. Immobilization of the converter enables RuvB to convert the ATP-contained energy into a lever motion, pulling 2 nucleotides of DNA out of the RuvA tetramer per ATP hydrolyzed, thus driving DNA branch migration. The RuvB motors rotate together with the DNA substrate, which together with the progressing nucleotide cycle form the mechanistic basis for DNA recombination by continuous HJ branch migration. Branch migration allows RuvC to scan DNA until it finds its consensus sequence, where it cleaves and resolves cruciform DNA. The chain is Holliday junction branch migration complex subunit RuvB from Bacteroides thetaiotaomicron (strain ATCC 29148 / DSM 2079 / JCM 5827 / CCUG 10774 / NCTC 10582 / VPI-5482 / E50).